Consider the following 281-residue polypeptide: sn-glycerol-3-phosphate transport system permease protein UgpE (281 aa).

A run of 6 helical transmembrane segments spans residues 16 to 36, 85 to 105, 113 to 133, 142 to 162, 202 to 222, and 247 to 267; these read LILG…AATL, FSIT…IVWF, FFWM…FPTV, LDSY…TFLF, ALFV…LLII, and WNSV…IVLV. One can recognise an ABC transmembrane type-1 domain in the interval 77-268; it reads LLNSFVMAFS…IPPVVIVLVM (192 aa).

Belongs to the binding-protein-dependent transport system permease family. UgpAE subfamily. The complex is composed of two ATP-binding proteins (UgpC), two transmembrane proteins (UgpA and UgpE) and a solute-binding protein (UgpB).

It is found in the cell inner membrane. Its function is as follows. Part of the ABC transporter complex UgpBAEC involved in sn-glycerol-3-phosphate (G3P) import. Probably responsible for the translocation of the substrate across the membrane. Can also transport glycerophosphoryl diesters, which are hydrolyzed to G3P and alcohol during transport. The G3P moiety can be detected in the cytoplasm whereas the corresponding alcohol is usually found in the culture medium. It was proposed by Yang et al that the complex could also transport glycerol-2-phosphate (G2P) in vivo, but it was shown later by Wuttge et al that UgpB does not bind G2P, questioning this transport activity. G2P might be converted in the periplasm to G3P before its transport. The protein is sn-glycerol-3-phosphate transport system permease protein UgpE of Escherichia coli (strain K12).